An 82-amino-acid polypeptide reads, in one-letter code: Protein Rv1078A (82 aa).

Over residues 35-54 the composition is skewed to basic residues; the sequence is GGPTRRLRRRPAVTRRRRPD. The tract at residues 35 to 82 is disordered; it reads GGPTRRLRRRPAVTRRRRPDRRFVRCRPSPTRRGLPGCWRHSSTGPHT.

The protein localises to the cytoplasm. The polypeptide is Protein Rv1078A (Mycobacterium tuberculosis (strain ATCC 25618 / H37Rv)).